The following is a 479-amino-acid chain: Cell division protein FtsA (479 aa).

The disordered stretch occupies residues 417 to 458; it reads QGRQTERKENEQRDNTDRQREDTPKQTVKKKEKTGPSFGDKL. A compositionally biased stretch (basic and acidic residues) spans 420-440; it reads QTERKENEQRDNTDRQREDTP.

It belongs to the FtsA/MreB family. In terms of assembly, self-interacts. Interacts with FtsZ.

Its subcellular location is the cell inner membrane. Functionally, cell division protein that is involved in the assembly of the Z ring. May serve as a membrane anchor for the Z ring. This is Cell division protein FtsA from Porphyromonas gingivalis (strain ATCC BAA-308 / W83).